Reading from the N-terminus, the 792-residue chain is uncharacterized protein (792 aa).

25 consecutive repeat copies span residues N91–I102, N103–I114, N115–T126, N127–T138, N139–I150, N151–T162, N163–I174, N175–T186, N187–I198, N199–T210, N211–T222, N223–T234, N235–T246, N247–T258, N259–T270, N271–I282, N283–I294, N295–T306, N307–T318, D319–I330, N331–T342, N343–T354, D355–T366, N367–T378, and N379–T390. The interval N91–T390 is 25 X 12 AA tandem repeat of N-[SV]-[RS]-T-[NS]-A-T-T-T-[AE]-[ST]-[IT]. Positions S113–K417 are disordered. Low complexity predominate over residues T118 to S393. Basic and acidic residues predominate over residues A394 to K417.

This is an uncharacterized protein from Saccharomyces cerevisiae (strain ATCC 204508 / S288c) (Baker's yeast).